Reading from the N-terminus, the 402-residue chain is 4-hydroxy-3-methylbut-2-enyl diphosphate reductase (402 aa).

Cysteine 66 contacts [4Fe-4S] cluster. Position 96 (histidine 96) interacts with (2E)-4-hydroxy-3-methylbut-2-enyl diphosphate. Residue histidine 96 coordinates dimethylallyl diphosphate. Residue histidine 96 coordinates isopentenyl diphosphate. Cysteine 157 provides a ligand contact to [4Fe-4S] cluster. Residue histidine 185 coordinates (2E)-4-hydroxy-3-methylbut-2-enyl diphosphate. Residue histidine 185 coordinates dimethylallyl diphosphate. Histidine 185 lines the isopentenyl diphosphate pocket. Glutamate 187 functions as the Proton donor in the catalytic mechanism. A (2E)-4-hydroxy-3-methylbut-2-enyl diphosphate-binding site is contributed by threonine 250. Cysteine 288 serves as a coordination point for [4Fe-4S] cluster. Serine 317, serine 318, asparagine 319, and serine 379 together coordinate (2E)-4-hydroxy-3-methylbut-2-enyl diphosphate. Residues serine 317, serine 318, asparagine 319, and serine 379 each coordinate dimethylallyl diphosphate. Isopentenyl diphosphate is bound by residues serine 317, serine 318, asparagine 319, and serine 379.

The protein belongs to the IspH family. It depends on [4Fe-4S] cluster as a cofactor.

The enzyme catalyses isopentenyl diphosphate + 2 oxidized [2Fe-2S]-[ferredoxin] + H2O = (2E)-4-hydroxy-3-methylbut-2-enyl diphosphate + 2 reduced [2Fe-2S]-[ferredoxin] + 2 H(+). It carries out the reaction dimethylallyl diphosphate + 2 oxidized [2Fe-2S]-[ferredoxin] + H2O = (2E)-4-hydroxy-3-methylbut-2-enyl diphosphate + 2 reduced [2Fe-2S]-[ferredoxin] + 2 H(+). The protein operates within isoprenoid biosynthesis; dimethylallyl diphosphate biosynthesis; dimethylallyl diphosphate from (2E)-4-hydroxy-3-methylbutenyl diphosphate: step 1/1. It functions in the pathway isoprenoid biosynthesis; isopentenyl diphosphate biosynthesis via DXP pathway; isopentenyl diphosphate from 1-deoxy-D-xylulose 5-phosphate: step 6/6. Functionally, catalyzes the conversion of 1-hydroxy-2-methyl-2-(E)-butenyl 4-diphosphate (HMBPP) into a mixture of isopentenyl diphosphate (IPP) and dimethylallyl diphosphate (DMAPP). Acts in the terminal step of the DOXP/MEP pathway for isoprenoid precursor biosynthesis. The chain is 4-hydroxy-3-methylbut-2-enyl diphosphate reductase from Trichormus variabilis (strain ATCC 29413 / PCC 7937) (Anabaena variabilis).